The chain runs to 68 residues: Movement protein TGBp3 (68 aa).

Residues 1–6 (MFSGKE) are Lumenal-facing. Residues 7-26 (ITLFALSTLIALIVLNYMSA) traverse the membrane as a helical segment. At 27-68 (TPNPVCLIELTGHSAVLRGNNCESLTSGVIEALSAHLHGLRN) the chain is on the cytoplasmic side.

This sequence belongs to the Tymovirales TGBp3 protein family.

The protein resides in the host endoplasmic reticulum membrane. Its function is as follows. Plays a role in viral cell-to-cell propagation, by facilitating genome transport to neighboring plant cells through plasmosdesmata. May induce the formation of granular vesicles derived from the Endoplasmic reticulum, which align on actin filaments. The protein is Movement protein TGBp3 of Papaya mosaic potexvirus (PMV).